We begin with the raw amino-acid sequence, 374 residues long: Type II methyltransferase M.NgoFVII (374 aa).

An SAM-dependent MTase C5-type domain is found at 16–344 (PKILSLFSGC…KSILPIFSDN (329 aa)). C88 is a catalytic residue.

It belongs to the class I-like SAM-binding methyltransferase superfamily. C5-methyltransferase family.

The catalysed reaction is a 2'-deoxycytidine in DNA + S-adenosyl-L-methionine = a 5-methyl-2'-deoxycytidine in DNA + S-adenosyl-L-homocysteine + H(+). Functionally, a methylase, recognizes the double-stranded sequence 5'-GCSGC-3', methylates C-5 on both strands, and protects the DNA from cleavage by the NgoFVII endonuclease. In Neisseria gonorrhoeae, this protein is Type II methyltransferase M.NgoFVII (ngoFVIIM).